Consider the following 103-residue polypeptide: METSNGTETWYMSLHAVLKALNTTLHSHLLCRPGPGPGPDNQTEDRRASLPGRNDNSYMYILFVMFLFAVTVGSLILGYTRSRKVDKRSDPYHVYIKNRVSMI.

3 N-linked (GlcNAc...) asparagine glycosylation sites follow: Asn5, Asn22, and Asn41. The disordered stretch occupies residues 30-52 (LCRPGPGPGPDNQTEDRRASLPG). Residues 57 to 77 (SYMYILFVMFLFAVTVGSLIL) traverse the membrane as a helical segment. The segment at 68 to 79 (FAVTVGSLILGY) is interaction with KCNQ1. The Cytoplasmic portion of the chain corresponds to 78-103 (GYTRSRKVDKRSDPYHVYIKNRVSMI).

Belongs to the potassium channel KCNE family. Interacts with KCNB1. Interacts with KCNC2. Associates with KCNC4/Kv3.4. Interacts with KCNQ1; associates with a KCNQ1:KCNE3 stoichiometry of 4:4; produces a current with nearly instantaneous activation with a linear current-voltage relationship and alters membrane raft localization; affects KCNQ1 structure and gating properties.

Its subcellular location is the cell membrane. It localises to the cytoplasm. The protein resides in the perikaryon. The protein localises to the cell projection. It is found in the dendrite. Its subcellular location is the membrane raft. Ancillary protein that functions as a regulatory subunit of the voltage-gated potassium (Kv) channel complex composed of pore-forming and potassium-conducting alpha subunits and of regulatory beta subunits. KCNE3 beta subunit modulates the gating kinetics and enhances stability of the channel complex. Alters the gating of the delayed rectifier Kv channel containing KCNB1 alpha subunit. Associates with KCNC4/Kv3.4 alpha subunit to form the subthreshold Kv channel in skeletal muscle and to establish the resting membrane potential (RMP) in muscle cells. Association with KCNQ1/KCLQT1 alpha subunit may form the intestinal cAMP-stimulated potassium channel involved in chloride secretion that produces a current with nearly instantaneous activation with a linear current-voltage relationship. This chain is Potassium voltage-gated channel subfamily E member 3, found in Mus musculus (Mouse).